We begin with the raw amino-acid sequence, 261 residues long: Large ribosomal subunit protein uL2 (261 aa).

Positions 207–233 are disordered; that stretch reads VEHPHGGGNHQHIGKASTVKRGTPPGR.

This sequence belongs to the universal ribosomal protein uL2 family.

It is found in the cytoplasm. This Aedes albopictus (Asian tiger mosquito) protein is Large ribosomal subunit protein uL2 (RpL8).